Consider the following 433-residue polypeptide: Ligand-dependent corepressor (433 aa).

Residues 1–147 form a disordered region; it reads MQRMIQQFAA…GTREGFGHST (147 aa). The span at 13-34 shows a compositional bias: polar residues; that stretch reads TSKTSSTQDPSQPNSTKNQSLP. Positions 36-48 are enriched in low complexity; the sequence is ASPVTTSPTAATT. Phosphoserine is present on S42. Positions 53–57 match the Interaction with nuclear receptors motif; that stretch reads LSKLL. The residue at position 63 (S63) is a Phosphoserine. Positions 88–110 are enriched in polar residues; sequence KKSPCASSTSLSHSPGCSSTQGN. A Phosphoserine modification is found at S249. A Glycyl lysine isopeptide (Lys-Gly) (interchain with G-Cter in SUMO2) cross-link involves residue K254. A disordered region spans residues 299–348; sequence QNRKSMLDAGPDSWGSDAEQSTSGQPYPTSDQEGDPGSKQPRKKRGRYRQ. A compositionally biased stretch (polar residues) spans 316 to 329; that stretch reads AEQSTSGQPYPTSD. The Nuclear localization signal motif lies at 339–345; it reads PRKKRGR. The region spanning 340–392 is the HTH psq-type domain; it reads RKKRGRYRQYNSEILEEAISVVMSGKMSVSKAQSIYGIPHSTLEYKVKERLGT. Positions 368 to 388 form a DNA-binding region, H-T-H motif; sequence VSKAQSIYGIPHSTLEYKVKE. A disordered region spans residues 393–412; that stretch reads LKNPPKKKMKLMRSEGPDVS. K414 participates in a covalent cross-link: Glycyl lysine isopeptide (Lys-Gly) (interchain with G-Cter in SUMO2).

Interacts with ESR1 and ESR2 in the presence of estradiol. Interacts with CTBP1, HDAC3 and HDAC6. Component of a large corepressor complex that contains about 20 proteins, including CTBP1, CTBP2, HDAC1 and HDAC2. Detected in heart and kidney.

It is found in the nucleus. Its function is as follows. Repressor of ligand-dependent transcription activation by various nuclear repressors. Repressor of ligand-dependent transcription activation by ESR1, ESR2, NR3C1, PGR, RARA, RARB, RARG, RXRA and VDR. May act as transcription activator that binds DNA elements with the sequence 5'-CCCTATCGATCGATCTCTACCT-3'. The chain is Ligand-dependent corepressor (Lcor) from Mus musculus (Mouse).